The following is a 554-amino-acid chain: Exonuclease V, mitochondrial (554 aa).

The transit peptide at 1–17 (MLRCRSSINILQLHSRF) directs the protein to the mitochondrion. 4 residues coordinate [4Fe-4S] cluster: Cys-138, Cys-522, Cys-525, and Cys-531.

The protein belongs to the EXO5 family. As to quaternary structure, monomer. The cofactor is Mg(2+). [4Fe-4S] cluster is required as a cofactor.

It localises to the mitochondrion. Single strand DNA specific 5'exonuclease involved in mitochondrial DNA replication and recombination. Releases dinucleotides as main products of catalysis. Has the capacity to slide across 5'double-stranded DNA or 5'RNA sequences and resumes cutting two nucleotides downstream of the double-stranded-to-single-stranded junction or RNA-to-DNA junction, respectively. The chain is Exonuclease V, mitochondrial (EXO5) from Vanderwaltozyma polyspora (strain ATCC 22028 / DSM 70294 / BCRC 21397 / CBS 2163 / NBRC 10782 / NRRL Y-8283 / UCD 57-17) (Kluyveromyces polysporus).